Here is an 885-residue protein sequence, read N- to C-terminus: Chromatin assembly factor 1 subunit A-B (885 aa).

Disordered stretches follow at residues 1-24, 115-157, 176-361, and 536-605; these read MPGKEAAGDVMKSSTKSNTKKMVQ, EDSN…NEEC, LDKP…EEEK, and VDSD…QKLK. A compositionally biased stretch (low complexity) spans 12-21; that stretch reads KSSTKSNTKK. Composition is skewed to polar residues over residues 116–128, 134–157, and 182–193; these read DSNISTSNDSPLN, QLANGTVSPERSTTNAPLSTNEEC, and SAASCTSVSNFS. Low complexity-rich tracts occupy residues 211 to 227 and 237 to 254; these read VSVSSSSSPVSLSSPDV and SSPSTSTTPTGKATSNKT. The stretch at 251 to 376 forms a coiled coil; it reads SNKTSAEKKK…KAEITRFLQK (126 aa). Positions 255–361 are enriched in basic and acidic residues; it reads SAEKKKTKDK…EEKRLKEEEK (107 aa). Composition is skewed to acidic residues over residues 536–548 and 557–573; these read VDSDEEWEEEEPG and ENEDDDPKEEEDEDDDG. Residues 629 to 665 form a necessary for homodimerization, competence for chromatin assembly region; it reads CVWCDSKASEIRLLQKFSACILESPAVEEELTQDISS.

The protein belongs to the CHAF1A family. In terms of assembly, homodimer.

It is found in the nucleus. Functionally, involved in chromatin assembly in DNA replication and DNA repair. The sequence is that of Chromatin assembly factor 1 subunit A-B (chaf1a-b) from Xenopus laevis (African clawed frog).